The following is a 438-amino-acid chain: Mitochondrial distribution and morphology protein 12 (438 aa).

The region spanning Met-1–Val-438 is the SMP-LTD domain. Disordered regions lie at residues Ser-110–Leu-154, Ser-185–Arg-277, and Gly-353–Glu-379. The segment covering Asp-212–Leu-226 has biased composition (polar residues). The segment covering Pro-227–Ser-245 has biased composition (low complexity). Over residues Ser-354–Ser-364 the composition is skewed to polar residues. Positions Asp-365–Glu-379 are enriched in basic and acidic residues.

The protein belongs to the MDM12 family. Component of the ER-mitochondria encounter structure (ERMES) or MDM complex, composed of mmm1, mdm10, mdm12 and mdm34. A mmm1 homodimer associates with one molecule of mdm12 on each side in a pairwise head-to-tail manner, and the SMP-LTD domains of mmm1 and mdm12 generate a continuous hydrophobic tunnel for phospholipid trafficking.

The protein resides in the mitochondrion outer membrane. It localises to the endoplasmic reticulum membrane. Its function is as follows. Component of the ERMES/MDM complex, which serves as a molecular tether to connect the endoplasmic reticulum (ER) and mitochondria. Components of this complex are involved in the control of mitochondrial shape and protein biogenesis, and function in nonvesicular lipid trafficking between the ER and mitochondria. Mdm12 is required for the interaction of the ER-resident membrane protein mmm1 and the outer mitochondrial membrane-resident beta-barrel protein mdm10. The mdm12-mmm1 subcomplex functions in the major beta-barrel assembly pathway that is responsible for biogenesis of all mitochondrial outer membrane beta-barrel proteins, and acts in a late step after the SAM complex. The mdm10-mdm12-mmm1 subcomplex further acts in the TOM40-specific pathway after the action of the mdm12-mmm1 complex. Essential for establishing and maintaining the structure of mitochondria and maintenance of mtDNA nucleoids. This Penicillium rubens (strain ATCC 28089 / DSM 1075 / NRRL 1951 / Wisconsin 54-1255) (Penicillium chrysogenum) protein is Mitochondrial distribution and morphology protein 12.